Here is a 284-residue protein sequence, read N- to C-terminus: 4-diphosphocytidyl-2-C-methyl-D-erythritol kinase (284 aa).

The active site involves K14. Residue 98–108 coordinates ATP; that stretch reads PMGGGLGGGSS. D140 is an active-site residue.

The protein belongs to the GHMP kinase family. IspE subfamily.

It catalyses the reaction 4-CDP-2-C-methyl-D-erythritol + ATP = 4-CDP-2-C-methyl-D-erythritol 2-phosphate + ADP + H(+). It functions in the pathway isoprenoid biosynthesis; isopentenyl diphosphate biosynthesis via DXP pathway; isopentenyl diphosphate from 1-deoxy-D-xylulose 5-phosphate: step 3/6. Its function is as follows. Catalyzes the phosphorylation of the position 2 hydroxy group of 4-diphosphocytidyl-2C-methyl-D-erythritol. In Shewanella baltica (strain OS185), this protein is 4-diphosphocytidyl-2-C-methyl-D-erythritol kinase.